A 383-amino-acid chain; its full sequence is Na(+)/H(+) antiporter (383 aa).

A run of 12 helical transmembrane segments spans residues 1–21, 24–44, 51–71, 83–103, 112–132, 145–165, 186–206, 216–236, 262–282, 291–311, 323–343, and 353–373; these read MEFI…SHIS, FGIP…QAGL, ILVH…AGLE, PGMF…WLTG, EAIF…VEVL, TILG…SFSL, LFYF…LMSL, IIIM…LIGL, VEAL…GLEV, ILFI…GGYI, ALMV…ILQI, and HYYS…PLIL.

The protein belongs to the monovalent cation:proton antiporter 2 (CPA2) transporter (TC 2.A.37) family.

The protein resides in the cell membrane. Functionally, na(+)/H(+) antiporter that extrudes sodium in exchange for external protons. Can also transport lithium. This chain is Na(+)/H(+) antiporter (napA), found in Enterococcus hirae.